We begin with the raw amino-acid sequence, 366 residues long: Pectinesterase A (366 aa).

The N-terminal stretch at 1 to 24 (MLKTISGTLALSLIIAASVHQAQA) is a signal peptide. Substrate is bound by residues Thr-109 and Gln-153. The active-site Proton donor is the Asp-178. The cysteines at positions 192 and 212 are disulfide-linked. Asp-199 acts as the Nucleophile in catalysis. Residues Arg-219, Asn-226, Tyr-230, Arg-267, Trp-269, and Thr-272 each coordinate substrate.

Belongs to the pectinesterase family. As to quaternary structure, monomer.

The protein resides in the secreted. It carries out the reaction [(1-&gt;4)-alpha-D-galacturonosyl methyl ester](n) + n H2O = [(1-&gt;4)-alpha-D-galacturonosyl](n) + n methanol + n H(+). The protein operates within glycan metabolism; pectin degradation; 2-dehydro-3-deoxy-D-gluconate from pectin: step 1/5. In terms of biological role, involved in maceration and soft-rotting of plant tissue. The sequence is that of Pectinesterase A (pemA) from Dickeya chrysanthemi (Pectobacterium chrysanthemi).